Here is a 384-residue protein sequence, read N- to C-terminus: 3,7-dimethylxanthine N-methyltransferase 2 (384 aa).

Y18, C61, N66, D100, L101, S139, F140, and C156 together coordinate S-adenosyl-L-homocysteine. Y157 serves as a coordination point for theobromine. C158 serves as a coordination point for S-adenosyl-L-homocysteine. Positions 160 and 161 each coordinate theobromine. N178 serves as a coordination point for Mg(2+). Residue S237 coordinates theobromine. Mg(2+)-binding residues include D260, F262, and N263. Residue Y368 participates in theobromine binding.

It belongs to the methyltransferase superfamily. Type-7 methyltransferase family. It depends on Mg(2+) as a cofactor. As to expression, highly expressed in developing endosperm. Detected in young leaves and flower buds. Present in immature fruits (grains), but barely in mature fruits.

It carries out the reaction 7-methylxanthine + S-adenosyl-L-methionine = theobromine + S-adenosyl-L-homocysteine + H(+). The enzyme catalyses theobromine + S-adenosyl-L-methionine = caffeine + S-adenosyl-L-homocysteine + H(+). It catalyses the reaction 1,7-dimethylxanthine + S-adenosyl-L-methionine = caffeine + S-adenosyl-L-homocysteine + H(+). It functions in the pathway alkaloid biosynthesis. Functionally, involved in the biosynthesis of caffeine. Catalyzes the conversion of 7-methylxanthine (7mX) to theobromine and of theobromine to caffeine. Has 1-N-methylation activity. This is 3,7-dimethylxanthine N-methyltransferase 2 from Coffea arabica (Arabian coffee).